The following is a 357-amino-acid chain: Beta-hexosaminidase (357 aa).

Substrate contacts are provided by residues aspartate 72, arginine 80, arginine 146, and 176 to 177; that span reads KH. Catalysis depends on histidine 189, which acts as the Proton donor/acceptor. Residue aspartate 260 is the Nucleophile of the active site.

The protein belongs to the glycosyl hydrolase 3 family. NagZ subfamily.

It is found in the cytoplasm. It catalyses the reaction Hydrolysis of terminal non-reducing N-acetyl-D-hexosamine residues in N-acetyl-beta-D-hexosaminides.. Its pathway is cell wall biogenesis; peptidoglycan recycling. Functionally, plays a role in peptidoglycan recycling by cleaving the terminal beta-1,4-linked N-acetylglucosamine (GlcNAc) from peptide-linked peptidoglycan fragments, giving rise to free GlcNAc, anhydro-N-acetylmuramic acid and anhydro-N-acetylmuramic acid-linked peptides. In Hydrogenovibrio crunogenus (strain DSM 25203 / XCL-2) (Thiomicrospira crunogena), this protein is Beta-hexosaminidase.